The primary structure comprises 270 residues: Protein-ADP-ribose hydrolase (270 aa).

Positions 73–267 constitute a Macro domain; the sequence is VSVKDCQKTN…LYDTYLQKEN (195 aa). ADP-D-ribose is bound by residues D92, I93, and N106. Residues C112, H117, and C119 each coordinate Zn(2+). ADP-D-ribose is bound by residues C119, I120, D121, S212, T213, G214, E215, and F216.

This sequence belongs to the MacroD-type family. Zn-Macro subfamily. As to quaternary structure, monomer. Interacts with the lipoylated form of GcvH-L. Zn(2+) serves as cofactor.

The enzyme catalyses 4-O-(ADP-D-ribosyl)-L-aspartyl-[protein] + H2O = L-aspartyl-[protein] + ADP-D-ribose + H(+). The catalysed reaction is 5-O-(ADP-D-ribosyl)-L-glutamyl-[protein] + H2O = L-glutamyl-[protein] + ADP-D-ribose + H(+). It carries out the reaction S-(ADP-D-ribosyl)-L-cysteinyl-[protein] + H2O = ADP-D-ribose + L-cysteinyl-[protein]. In terms of biological role, ADP-ribosylhydrolase that specifically reverses the SirTM-mediated mono-ADP-ribosylation at an asparatate residue of GcvH-L (SpyM50867), by releasing ADP-ribose from the target protein. May play a role in the regulation of the response to host-induced oxidative stress. It can also hydrolyze ADP-ribosyl-glutamate bonds and ADP-ribosyl-cysteine bonds. In vitro, it can remove the ADP-ribosyl modification from the human mono-ADP-ribosylated PARP1 E988Q mutant, which is primarily modified on glutamate site with only minor aspartate contribution. It can also hydrolyze the ADP-ribosyl-cysteinyl glycosidic bond of a Cys-ADP-ribosylated synthetic peptide. The protein is Protein-ADP-ribose hydrolase of Streptococcus pyogenes serotype M5 (strain Manfredo).